The chain runs to 93 residues: Aspartyl/glutamyl-tRNA(Asn/Gln) amidotransferase subunit C (93 aa).

Belongs to the GatC family. Heterotrimer of A, B and C subunits.

It catalyses the reaction L-glutamyl-tRNA(Gln) + L-glutamine + ATP + H2O = L-glutaminyl-tRNA(Gln) + L-glutamate + ADP + phosphate + H(+). It carries out the reaction L-aspartyl-tRNA(Asn) + L-glutamine + ATP + H2O = L-asparaginyl-tRNA(Asn) + L-glutamate + ADP + phosphate + 2 H(+). Allows the formation of correctly charged Asn-tRNA(Asn) or Gln-tRNA(Gln) through the transamidation of misacylated Asp-tRNA(Asn) or Glu-tRNA(Gln) in organisms which lack either or both of asparaginyl-tRNA or glutaminyl-tRNA synthetases. The reaction takes place in the presence of glutamine and ATP through an activated phospho-Asp-tRNA(Asn) or phospho-Glu-tRNA(Gln). In Rubrobacter xylanophilus (strain DSM 9941 / JCM 11954 / NBRC 16129 / PRD-1), this protein is Aspartyl/glutamyl-tRNA(Asn/Gln) amidotransferase subunit C.